The sequence spans 661 residues: L-type lectin-domain containing receptor kinase V.5 (661 aa).

Residues 1–25 (MSRELIILCQPILVLFLTLFYNSHG) form the signal peptide. Topologically, residues 26-282 (YFVSQGSVGI…KTSNRTKTVL (257 aa)) are extracellular. The segment at 30–250 (QGSVGIGFNG…GAIHYLMGWL (221 aa)) is legume-lectin like. 5 N-linked (GlcNAc...) asparagine glycosylation sites follow: asparagine 45, asparagine 64, asparagine 116, asparagine 198, and asparagine 276. The helical transmembrane segment at 283–303 (AVCLTVSVFAAFVASWIGFVF) threads the bilayer. The Cytoplasmic segment spans residues 304 to 661 (YLRHKKVKEV…TDSSFVSHGR (358 aa)). In terms of domain architecture, Protein kinase spans 338–596 (FKEKQLLGKG…LGVLCSHQAA (259 aa)). Residues 344–352 (LGKGGFGQV) and lysine 367 contribute to the ATP site. The active-site Proton acceptor is the aspartate 464.

The protein in the C-terminal section; belongs to the protein kinase superfamily. Ser/Thr protein kinase family. It in the N-terminal section; belongs to the leguminous lectin family. Post-translationally, autophosphorylated on a Ser residue. In terms of tissue distribution, expressed at low levels in stems, leaves, flowers and siliques.

It is found in the cell membrane. It carries out the reaction L-seryl-[protein] + ATP = O-phospho-L-seryl-[protein] + ADP + H(+). The catalysed reaction is L-threonyl-[protein] + ATP = O-phospho-L-threonyl-[protein] + ADP + H(+). Confers resistance to the pathogenic oomycetes Phytophthora infestans and Phytophthora capsici, but confers susceptibility to the pathogenic bacteria Pseudomonas syringae. The protein is L-type lectin-domain containing receptor kinase V.5 of Arabidopsis thaliana (Mouse-ear cress).